We begin with the raw amino-acid sequence, 536 residues long: Butyrophilin-like protein 9 (536 aa).

An N-terminal signal peptide occupies residues 1–35 (MADFSVFLGFLKQIPRCLSIFFTYLLFLQLWEVNS). 2 consecutive Ig-like V-type domains span residues 36–149 (DKVW…WELE) and 152–241 (GSGS…KEFV). Topologically, residues 36-257 (DKVWVLGPEE…FLPRMSPWKK (222 aa)) are extracellular. A disulfide bond links cysteine 59 and cysteine 133. N-linked (GlcNAc...) asparagine glycosylation is found at asparagine 102, asparagine 139, and asparagine 224. Cysteines 173 and 227 form a disulfide. Residues 258 to 278 (AFVGTLVVLPLSLIVLTMLAL) form a helical membrane-spanning segment. Residues 279-536 (RYFYKLRSFQ…PAWAVNEAVS (258 aa)) are Cytoplasmic-facing. One can recognise a B30.2/SPRY domain in the interval 307–506 (DWRRSEGQAE…MTICSLPVRG (200 aa)).

This sequence belongs to the immunoglobulin superfamily. BTN/MOG family.

The protein localises to the membrane. This chain is Butyrophilin-like protein 9 (Btnl9), found in Mus musculus (Mouse).